We begin with the raw amino-acid sequence, 101 residues long: Ubiquitin-related modifier 1 homolog (101 aa).

Gly-101 bears the 1-thioglycine mark. Gly-101 participates in a covalent cross-link: Glycyl lysine isopeptide (Gly-Lys) (interchain with K-? in acceptor proteins).

This sequence belongs to the URM1 family. Interacts with cer. C-terminal thiocarboxylation occurs in 2 steps, it is first acyl-adenylated (-COAMP) via the hesA/moeB/thiF part of the MOCS3 homolog, then thiocarboxylated (-COSH) via the rhodanese domain of the MOCS3 homolog.

The protein localises to the cytoplasm. The protein operates within tRNA modification; 5-methoxycarbonylmethyl-2-thiouridine-tRNA biosynthesis. Its function is as follows. Acts as a sulfur carrier required for 2-thiolation of mcm(5)S(2)U at tRNA wobble positions of cytosolic tRNA(Lys), tRNA(Glu) and tRNA(Gln). Serves as sulfur donor in tRNA 2-thiolation reaction by being thiocarboxylated (-COSH) at its C-terminus by MOCS3. The sulfur is then transferred to tRNA to form 2-thiolation of mcm(5)S(2)U. Also acts as a ubiquitin-like protein (UBL) that is covalently conjugated via an isopeptide bond to lysine residues of target proteins such as Prx2/Jafrac1, Ciao1, Eip71CD and GILT1. The thiocarboxylated form serves as substrate for conjugation and oxidative stress specifically induces the formation of UBL-protein conjugates. This is Ubiquitin-related modifier 1 homolog from Drosophila sechellia (Fruit fly).